A 430-amino-acid polypeptide reads, in one-letter code: C4-dicarboxylate transport protein (430 aa).

The next 8 membrane-spanning stretches (helical) occupy residues 9-29 (VLYVQVIFAIIVGVILGHFYP), 45-65 (LIKMVIGPIIFCTVVTGIAGM), 79-99 (LLYFEIVSTFALLLGLAATHL), 149-169 (GEILQILLIALLFGSVLAHLG), 185-205 (VLFGIVHIVTKLAPIGAFGAM), 223-243 (LIGTFYLTSVVFVLVVLGAIA), 308-328 (IYMTMAVLFIAQATNIELTWM), and 356-376 (AATLAVVPTIPLSGMVLILGI).

This sequence belongs to the dicarboxylate/amino acid:cation symporter (DAACS) (TC 2.A.23) family.

It is found in the cell inner membrane. Its function is as follows. Responsible for the transport of dicarboxylates such as succinate, fumarate, and malate from the periplasm across the membrane. In Burkholderia orbicola (strain AU 1054), this protein is C4-dicarboxylate transport protein.